The primary structure comprises 762 residues: Probable inorganic carbon transporter subunit DabA (762 aa).

Cysteine 279, aspartate 281, histidine 461, and cysteine 476 together coordinate Zn(2+).

Belongs to the inorganic carbon transporter (TC 9.A.2) DabA family. As to quaternary structure, forms a complex with DabB. It depends on Zn(2+) as a cofactor.

It localises to the cell inner membrane. Functionally, part of an energy-coupled inorganic carbon pump. This chain is Probable inorganic carbon transporter subunit DabA, found in Legionella pneumophila subsp. pneumophila (strain Philadelphia 1 / ATCC 33152 / DSM 7513).